A 335-amino-acid chain; its full sequence is tRNA N6-adenosine threonylcarbamoyltransferase (335 aa).

2 residues coordinate Fe cation: His-110 and His-114. Substrate-binding positions include 132–136 (LVSGG), Asp-165, Gly-178, and Asn-271. Asp-299 is a binding site for Fe cation.

The protein belongs to the KAE1 / TsaD family. Requires Fe(2+) as cofactor.

It is found in the cytoplasm. The catalysed reaction is L-threonylcarbamoyladenylate + adenosine(37) in tRNA = N(6)-L-threonylcarbamoyladenosine(37) in tRNA + AMP + H(+). Required for the formation of a threonylcarbamoyl group on adenosine at position 37 (t(6)A37) in tRNAs that read codons beginning with adenine. Is involved in the transfer of the threonylcarbamoyl moiety of threonylcarbamoyl-AMP (TC-AMP) to the N6 group of A37, together with TsaE and TsaB. TsaD likely plays a direct catalytic role in this reaction. The protein is tRNA N6-adenosine threonylcarbamoyltransferase of Campylobacter jejuni subsp. jejuni serotype O:2 (strain ATCC 700819 / NCTC 11168).